Here is a 279-residue protein sequence, read N- to C-terminus: High choriolytic enzyme 2 (279 aa).

Residues 1–20 (MNLASSACLLLLFLLGIAQA) form the signal peptide. Positions 21 to 79 (LPVQNEEGHEEGNKEGHGEEGVEEGDEDDFVDFTTRILTSNNNTDQLLLEGDLVAPTNR) are cleaved as a propeptide — activation peptide. The span at 26-40 (EEGHEEGNKEGHGEE) shows a compositional bias: basic and acidic residues. The interval 26 to 46 (EEGHEEGNKEGHGEEGVEEGD) is disordered. The N-linked (GlcNAc...) asparagine glycan is linked to Asn-62. The Peptidase M12A domain occupies 80–279 (NAMKCWYNSC…TRSNVLYNCR (200 aa)). Intrachain disulfides connect Cys-84/Cys-89, Cys-129/Cys-278, and Cys-150/Cys-170. His-178 contributes to the Zn(2+) binding site. Glu-179 is a catalytic residue. Residues His-182 and His-188 each contribute to the Zn(2+) site.

It depends on Zn(2+) as a cofactor.

Its subcellular location is the zymogen granule. It carries out the reaction Hydrolysis of the inner layer of fish egg envelope. Also hydrolysis of casein and small molecule substrates such as succinyl-Leu-Leu-Val-Tyr-|-7-(4-methyl)coumarylamide.. Participates in the breakdown of the egg envelope, which is derived from the egg extracellular matrix, at the time of hatching. Thus allowing the newly hatched fish to swim free. HCE binds tightly to the egg envelope while it exerts the choriolytic swelling action. This chain is High choriolytic enzyme 2 (hceb), found in Oryzias latipes (Japanese rice fish).